The primary structure comprises 340 residues: Tetraacyldisaccharide 4'-kinase (340 aa).

50 to 57 (HGGGAGKT) serves as a coordination point for ATP.

Belongs to the LpxK family.

It catalyses the reaction a lipid A disaccharide + ATP = a lipid IVA + ADP + H(+). Its pathway is glycolipid biosynthesis; lipid IV(A) biosynthesis; lipid IV(A) from (3R)-3-hydroxytetradecanoyl-[acyl-carrier-protein] and UDP-N-acetyl-alpha-D-glucosamine: step 6/6. Functionally, transfers the gamma-phosphate of ATP to the 4'-position of a tetraacyldisaccharide 1-phosphate intermediate (termed DS-1-P) to form tetraacyldisaccharide 1,4'-bis-phosphate (lipid IVA). This chain is Tetraacyldisaccharide 4'-kinase, found in Rhodopseudomonas palustris (strain BisA53).